The primary structure comprises 197 residues: Adenylylsulfatase HINT3 (197 aa).

The disordered stretch occupies residues 14–43; it reads NPPGPNPTRDPTLRVSDCSSGSSGDGKVES. Residues 51–158 form the HIT domain; it reads VFCKIIRGES…IPRKERDCLW (108 aa). The short motif at 143–147 is the Histidine triad motif element; that stretch reads HTHIH. The Tele-AMP-histidine intermediate role is filled by His-145. Position 147 (His-147) interacts with substrate.

It localises to the peroxisome. It catalyses the reaction adenosine 5'-phosphosulfate + H2O = sulfate + AMP + 2 H(+). Its function is as follows. Possesses adenylylsulfatase activity in vitro. The protein is Adenylylsulfatase HINT3 of Arabidopsis thaliana (Mouse-ear cress).